Consider the following 366-residue polypeptide: MTDLDNLKADLIGQISQSGDLAGLESVRVHALGKQGVVTALLKSLGKMTPEERQEKGPVIHSLRQAVAQGIADRKQALETALLNEKLASETIDLSLPSPKMPKGSLHPVSQVMDELAEIFADLGFAVASGPEIEDEWHNFSALNIPESHPARAMHDTFYFEPQEGASDKGDKGRMLLRTHTSPVQIRTMQGQEPPIRIIAPGRTYRSDSDATHTPMFHQVEGLVIDKGVHLGHLKWTLETFVRAYFERDDIVLRLRPSYFPFTEPSMEVDVGYTLEKGRRIIGGKQPDGWMEILGSGMVHPNVITACGLDPNVWQGFAFGCGIDRLAMLKYGMDDLRAFFDGDLRWLRHFGFAALDVPTLSGGVGA.

A Mg(2+)-binding site is contributed by E264.

The protein belongs to the class-II aminoacyl-tRNA synthetase family. Phe-tRNA synthetase alpha subunit type 1 subfamily. Tetramer of two alpha and two beta subunits. The cofactor is Mg(2+).

The protein resides in the cytoplasm. It carries out the reaction tRNA(Phe) + L-phenylalanine + ATP = L-phenylalanyl-tRNA(Phe) + AMP + diphosphate + H(+). The polypeptide is Phenylalanine--tRNA ligase alpha subunit (Zymomonas mobilis subsp. mobilis (strain ATCC 31821 / ZM4 / CP4)).